Here is a 180-residue protein sequence, read N- to C-terminus: MSLETLKTLIPDYAKDIRLNIGSLANETILSEQQKYGCYLASAHAVGEAQTLRAIEAEARGKLSVEALNAAKAASAIMGMNNVYYRATHLVSNTTYTTMPARLRMNVIGNPGVEKVDFELWSLAVSAINGCGMCLDAHEAELRKHGVTSEQIQAAIRIGAVVNAAARVLAAEAALAAEPA.

The active-site Proton donor is Cys-131. Cys-131 and Cys-134 are oxidised to a cystine. Cys-134 (cysteine sulfenic acid (-SOH) intermediate) is an active-site residue.

It belongs to the AhpD family.

The catalysed reaction is N(6)-[(R)-dihydrolipoyl]-L-lysyl-[lipoyl-carrier protein] + a hydroperoxide = N(6)-[(R)-lipoyl]-L-lysyl-[lipoyl-carrier protein] + an alcohol + H2O. In terms of biological role, antioxidant protein with alkyl hydroperoxidase activity. Required for the reduction of the AhpC active site cysteine residues and for the regeneration of the AhpC enzyme activity. The sequence is that of Alkyl hydroperoxide reductase AhpD from Hyphomonas neptunium (strain ATCC 15444).